A 163-amino-acid polypeptide reads, in one-letter code: Epithelial membrane protein 3 (163 aa).

A helical membrane pass occupies residues 4-24; the sequence is LLLVVSALHILILVLLFVATL. Residues Asn-46 and Asn-56 are each glycosylated (N-linked (GlcNAc...) asparagine). 3 consecutive transmembrane segments (helical) span residues 66–86, 100–120, and 139–159; these read VQAL…LFMF, TGLC…IYAI, and FALA…YIHL.

The protein belongs to the PMP-22/EMP/MP20 family.

It is found in the membrane. Probably involved in cell proliferation and cell-cell interactions. The sequence is that of Epithelial membrane protein 3 (Emp3) from Mus musculus (Mouse).